A 94-amino-acid chain; its full sequence is Acylphosphatase (94 aa).

Positions 3 to 90 constitute an Acylphosphatase-like domain; that stretch reads RVHVIVEGRV…SDEKQFRIMY (88 aa). Catalysis depends on residues R18 and N36.

Belongs to the acylphosphatase family.

It catalyses the reaction an acyl phosphate + H2O = a carboxylate + phosphate + H(+). The polypeptide is Acylphosphatase (acyP) (Geobacillus kaustophilus (strain HTA426)).